The primary structure comprises 727 residues: Glucans biosynthesis glucosyltransferase H (727 aa).

The segment at 18 to 43 (SAMPNERPGAMEPQSLSQMPEGFPRR) is disordered. Transmembrane regions (helical) follow at residues 58–78 (FFVV…MGAV), 94–114 (LFAI…AGFF), 278–298 (LQQF…GWWV), 408–428 (IMAY…LMLA), 460–480 (LFYI…LLLL), 496–516 (ILSV…MMFI), and 572–592 (LLAW…ISAW).

It belongs to the glycosyltransferase 2 family. OpgH subfamily.

It localises to the cell inner membrane. It participates in glycan metabolism; osmoregulated periplasmic glucan (OPG) biosynthesis. In terms of biological role, involved in the biosynthesis of osmoregulated periplasmic glucans (OPGs). In Shewanella sp. (strain ANA-3), this protein is Glucans biosynthesis glucosyltransferase H.